The chain runs to 128 residues: Prokineticin-2 (128 aa).

Positions 1 to 27 are cleaved as a signal peptide; sequence MRSSRCARLLLLLLLPPLLLTPPAGDA. 5 disulfide bridges follow: C34–C46, C40–C58, C45–C106, C68–C114, and C108–C124. A disordered region spans residues 71–95; that stretch reads MTRKNHFGNGRQERRKRKRRRKKKV. Residues 83–95 show a composition bias toward basic residues; that stretch reads ERRKRKRRRKKKV.

This sequence belongs to the AVIT (prokineticin) family.

It localises to the secreted. Functionally, may function as an output molecule from the suprachiasmatic nucleus (SCN) that transmits behavioral circadian rhythm. May also function locally within the SCN to synchronize output. Potently contracts gastrointestinal (GI) smooth muscle. This chain is Prokineticin-2 (PROK2), found in Bos taurus (Bovine).